The chain runs to 644 residues: Threonine--tRNA ligase (644 aa).

The 61-residue stretch at 1–61 (MINVTLPDGS…DGDAQVAIIT (61 aa)) folds into the TGS domain. The segment at 243–536 (DHRKLGKQME…LIESYAGKLP (294 aa)) is catalytic. Residues Cys336, His387, and His513 each contribute to the Zn(2+) site.

The protein belongs to the class-II aminoacyl-tRNA synthetase family. In terms of assembly, homodimer. Requires Zn(2+) as cofactor.

It is found in the cytoplasm. The catalysed reaction is tRNA(Thr) + L-threonine + ATP = L-threonyl-tRNA(Thr) + AMP + diphosphate + H(+). Functionally, catalyzes the attachment of threonine to tRNA(Thr) in a two-step reaction: L-threonine is first activated by ATP to form Thr-AMP and then transferred to the acceptor end of tRNA(Thr). Also edits incorrectly charged L-seryl-tRNA(Thr). In Maricaulis maris (strain MCS10) (Caulobacter maris), this protein is Threonine--tRNA ligase.